The chain runs to 652 residues: Vitrin (652 aa).

Residues Met-1–Ser-26 form the signal peptide. An LCCL domain is found at Thr-40 to Phe-133. Intrachain disulfides connect Cys-46/Cys-62 and Cys-66/Cys-86. 2 disordered regions span residues Glu-137–Pro-181 and Thr-196–Leu-231. Residues Thr-145–Pro-158 are compositionally biased toward low complexity. Polar residues predominate over residues Thr-196–Ser-212. VWFA domains follow at residues Asp-267 to Val-452 and Asp-469 to Val-638. A glycan (N-linked (GlcNAc...) asparagine) is linked at Asn-494.

Binds dermatan sulfate and chondroitin sulfate.

It localises to the secreted. Its subcellular location is the extracellular space. It is found in the extracellular matrix. Functionally, promotes matrix assembly and cell adhesiveness. Plays a role in spinal cord formation by regulating the proliferation and differentiation of neural stem cells. The protein is Vitrin (VIT) of Bos taurus (Bovine).